The primary structure comprises 248 residues: Sugar fermentation stimulation protein homolog (248 aa).

The protein belongs to the SfsA family.

The polypeptide is Sugar fermentation stimulation protein homolog (Methylorubrum extorquens (strain PA1) (Methylobacterium extorquens)).